Reading from the N-terminus, the 939-residue chain is Translation initiation factor IF-2 (939 aa).

Residues 57–274 (RLKPAAPAAP…APTKKNEQKI (218 aa)) form a disordered region. Basic and acidic residues-rich tracts occupy residues 83–122 (MEPK…KESV) and 129–138 (LEQEPPKEEL). Composition is skewed to polar residues over residues 146 to 158 (ESAS…SNPL) and 170 to 180 (VATTLATQTDA). Positions 208-227 (KRSEEPAPKADRPSLEEART) are enriched in basic and acidic residues. Residues 252–262 (ARKKKKEKKKP) show a composition bias toward basic residues. Residues 438–607 (ERPPVVTIMG…LVQSELLELK (170 aa)) enclose the tr-type G domain. Residues 447 to 454 (GHVDHGKT) form a G1 region. 447 to 454 (GHVDHGKT) provides a ligand contact to GTP. Residues 472–476 (GITQH) are G2. A G3 region spans residues 493 to 496 (DTPG). GTP contacts are provided by residues 493 to 497 (DTPGH) and 547 to 550 (NKVD). Residues 547–550 (NKVD) form a G4 region. Positions 583-585 (SAK) are G5.

It belongs to the TRAFAC class translation factor GTPase superfamily. Classic translation factor GTPase family. IF-2 subfamily.

Its subcellular location is the cytoplasm. One of the essential components for the initiation of protein synthesis. Protects formylmethionyl-tRNA from spontaneous hydrolysis and promotes its binding to the 30S ribosomal subunits. Also involved in the hydrolysis of GTP during the formation of the 70S ribosomal complex. This chain is Translation initiation factor IF-2, found in Wolinella succinogenes (strain ATCC 29543 / DSM 1740 / CCUG 13145 / JCM 31913 / LMG 7466 / NCTC 11488 / FDC 602W) (Vibrio succinogenes).